The primary structure comprises 277 residues: Probable ketoamine kinase HMPREF0351_12196 (277 aa).

An ATP-binding site is contributed by 84–86; it reads EWI. The active-site Proton acceptor is the D186.

Belongs to the fructosamine kinase family.

It catalyses the reaction N(6)-(D-ribulosyl)-L-lysine + ATP = N(6)-(3-O-phospho-D-ribulosyl)-L-lysine + ADP + H(+). It carries out the reaction N-(D-ribulosyl)-cadaverine + ATP = N-(3-O-phospho-D-ribulosyl)-cadaverine + ADP + H(+). The catalysed reaction is N(6)-(D-erythrulosyl)-L-lysine + ATP = N(6)-(3-O-phospho-D-erythrulosyl)-L-lysine + ADP + H(+). The enzyme catalyses N-(D-erythrulosyl)-cadaverine + ATP = N-(3-O-phospho-D-erythrulosyl)-cadaverine + ADP + H(+). It catalyses the reaction N(6)-D-ribulosyl-L-lysyl-[protein] + ATP = N(6)-(3-O-phospho-D-ribulosyl)-L-lysyl-[protein] + ADP + H(+). It carries out the reaction N(6)-(D-erythrulosyl)-L-lysyl-[protein] + ATP = N(6)-(3-O-phospho-D-erythrulosyl)-L-lysyl-[protein] + ADP + H(+). Ketoamine kinase that phosphorylates ketoamines, such as erythruloselysine, erythrulosecadaverine, ribuloselysine and ribulosecadaverine, on the third carbon of the sugar moiety to generate ketoamine 3-phosphate. Has higher activity on free lysine (erythruloselysine and ribuloselysine), than on ribuloselysine and erythruloselysine residues on glycated proteins. The chain is Probable ketoamine kinase HMPREF0351_12196 from Enterococcus faecium (strain ATCC BAA-472 / TX0016 / DO).